The following is a 378-amino-acid chain: Copper-containing nitrite reductase (378 aa).

The tat-type signal signal peptide spans M1–A38. Plastocyanin-like domains lie at A39 to I213 and Y214 to M378. Cu cation is bound by residues H133, H138, H173, C174, H183, M188, and H344.

The protein belongs to the multicopper oxidase family. In terms of assembly, homotrimer. Cu(+) serves as cofactor. It depends on Cu(2+) as a cofactor. The cofactor is FAD. Predicted to be exported by the Tat system. The position of the signal peptide cleavage has been experimentally proven.

Its subcellular location is the periplasm. The enzyme catalyses nitric oxide + Fe(III)-[cytochrome c] + H2O = Fe(II)-[cytochrome c] + nitrite + 2 H(+). It participates in nitrogen metabolism; nitrate reduction (denitrification); dinitrogen from nitrate: step 2/4. In Achromobacter cycloclastes, this protein is Copper-containing nitrite reductase (nirK).